A 746-amino-acid polypeptide reads, in one-letter code: Exostosin-1 (746 aa).

The Cytoplasmic segment spans residues 1-7 (MQAKKRY). A helical; Signal-anchor for type II membrane protein transmembrane segment spans residues 8 to 28 (FILLSAGSCLALLFYFGGLQF). Residues 29–746 (RASRSHSRRE…RKKYRDIERL (718 aa)) are Lumenal-facing. An N-linked (GlcNAc...) asparagine glycan is attached at N89. Disulfide bonds link C98/C103 and C109/C152. Residues L166 and Y203 each contribute to the a protein site. UDP contacts are provided by K267, K269, Y271, and R280. Cysteines 298 and 312 form a disulfide. H300 lines the a protein pocket. The UDP site is built by Y319 and Y324. A glycan (N-linked (GlcNAc...) asparagine) is linked at N330. 2 disulfides stabilise this stretch: C334–C355 and C652–C704. R346 and E349 together coordinate UDP.

It belongs to the glycosyltransferase 47 family. In terms of assembly, part of the heparan sulfate polymerase, a dimeric complex composed of EXT1 and EXT2. Could also form homooligomeric complexes. Interacts with NDST1. In terms of processing, N-glycosylated.

Its subcellular location is the golgi apparatus membrane. The protein resides in the golgi apparatus. It localises to the cis-Golgi network membrane. The protein localises to the endoplasmic reticulum membrane. The catalysed reaction is 3-O-{alpha-D-GlcNAc-[(1-&gt;4)-beta-D-GlcA-(1-&gt;4)-alpha-D-GlcNAc](n)-(1-&gt;4)-beta-D-GlcA-(1-&gt;3)-beta-D-Gal-(1-&gt;3)-beta-D-Gal-(1-&gt;4)-beta-D-Xyl}-L-seryl-[protein] + UDP-alpha-D-glucuronate = 3-O-{[(1-&gt;4)-beta-D-GlcA-(1-&gt;4)-alpha-D-GlcNAc](n+1)-(1-&gt;4)-beta-D-GlcA-(1-&gt;3)-beta-D-Gal-(1-&gt;3)-beta-D-Gal-(1-&gt;4)-beta-D-Xyl}-L-seryl-[protein] + UDP + H(+). It participates in protein modification; protein glycosylation. Glycosyltransferase forming with EXT2 the heterodimeric heparan sulfate polymerase which catalyzes the elongation of the heparan sulfate glycan backbone. Glycan backbone extension consists in the alternating transfer of (1-&gt;4)-beta-D-GlcA and (1-&gt;4)-alpha-D-GlcNAc residues from their respective UDP-sugar donors. Both EXT1 and EXT2 are required for the full activity of the polymerase since EXT1 bears the N-acetylglucosaminyl-proteoglycan 4-beta-glucuronosyltransferase activity within the complex while EXT2 carries the glucuronosyl-N-acetylglucosaminyl-proteoglycan 4-alpha-N-acetylglucosaminyltransferase activity. Heparan sulfate proteoglycans are ubiquitous components of the extracellular matrix and play an important role in tissue homeostasis and signaling. The protein is Exostosin-1 (EXT1) of Papio anubis (Olive baboon).